A 347-amino-acid chain; its full sequence is Protein RecA (347 aa).

68–75 (GPESSGKT) contacts ATP.

Belongs to the RecA family.

Its subcellular location is the cytoplasm. Its function is as follows. Can catalyze the hydrolysis of ATP in the presence of single-stranded DNA, the ATP-dependent uptake of single-stranded DNA by duplex DNA, and the ATP-dependent hybridization of homologous single-stranded DNAs. It interacts with LexA causing its activation and leading to its autocatalytic cleavage. The protein is Protein RecA of Mycobacterium sp. (strain JLS).